A 304-amino-acid chain; its full sequence is Ribonuclease Z (304 aa).

The Zn(2+) site is built by H63, H65, D67, H68, H143, D213, and H271. The active-site Proton acceptor is the D67.

The protein belongs to the RNase Z family. Homodimer. Zn(2+) serves as cofactor.

It catalyses the reaction Endonucleolytic cleavage of RNA, removing extra 3' nucleotides from tRNA precursor, generating 3' termini of tRNAs. A 3'-hydroxy group is left at the tRNA terminus and a 5'-phosphoryl group is left at the trailer molecule.. Functionally, zinc phosphodiesterase, which displays some tRNA 3'-processing endonuclease activity. Probably involved in tRNA maturation, by removing a 3'-trailer from precursor tRNA. This is Ribonuclease Z from Parabacteroides distasonis (strain ATCC 8503 / DSM 20701 / CIP 104284 / JCM 5825 / NCTC 11152).